Here is a 762-residue protein sequence, read N- to C-terminus: Pyrophosphate-energized vacuolar membrane proton pump (762 aa).

Topologically, residues 1–6 (MAILGE) are intravacuolar. Residues 7–33 (LGTEILIPVCGVIGIVFAVAQWFIVSK) traverse the membrane as a helical segment. Residues 34-81 (VKVTPGAASAAAGAKNGYGDYLIEEEEGLNDHNVVVKCAEIQTAISEG) are Cytoplasmic-facing. Residues 82–111 (ATSFLFTMYQYVGMFMVVFAAIIFLFLGSI) traverse the membrane as a helical segment. Residues 112-131 (EGFSTKGQPCTYSKGTCKPA) are Intravacuolar-facing. Residues C121 and C128 are joined by a disulfide bond. The chain crosses the membrane as a helical span at residues 132-159 (LYTALFSTASFLLGAITSLVSGFLGMKI). Residues 160 to 182 (ATYANARTTLEARKGVGKAFITA) are Cytoplasmic-facing. The chain crosses the membrane as a helical span at residues 183 to 212 (FRSGAVMGFLLSSSGLVVLYITINVFKMYY). The Intravacuolar segment spans residues 213-215 (GDD). A helical transmembrane segment spans residues 216 to 244 (WEGLFESITGYGLGGSSMALFGRVGGGIY). The Cytoplasmic segment spans residues 245–282 (TKAADVGADLVGKVERNIPEDDPRNPAVIADNVGDNVG). K246 is a substrate binding site. Mg(2+) contacts are provided by D249, D253, and D279. The chain crosses the membrane as a helical span at residues 283-308 (DIAGMGSDLFGSYAESSCAALVVASI). At 309–316 (SSFGINHD) the chain is on the intravacuolar side. The chain crosses the membrane as a helical span at residues 317-342 (FTAMCYPLLVSSVGIIVCLLTTLFAT). Topologically, residues 343-350 (DFFEIKAA) are cytoplasmic. The helical transmembrane segment at 351–378 (NEIEPALKKQLIISTALMTVGVAVISWL) threads the bilayer. The Intravacuolar portion of the chain corresponds to 379–397 (ALPAKFTIFNFGAQKEVSN). Residues 398–421 (WGLFFCVAVGLWAGLIIGFVTEYY) traverse the membrane as a helical segment. Residues 422 to 443 (TSNAYSPVQDVADSCRTGAATN) lie on the Cytoplasmic side of the membrane. Residues 444–468 (VIFGLALGYKSVIIPIFAIAVSIYV) traverse the membrane as a helical segment. Residues 469–474 (SFSIAA) are Intravacuolar-facing. The helical transmembrane segment at 475-501 (MYGIAMAALGMLSTMATGLAIDAYGPI) threads the bilayer. The Cytoplasmic segment spans residues 502–530 (SDNAGGIAEMAGMSHRIRERTDALDAAGN). The Mg(2+) site is built by D503 and N530. Residues 531-559 (TTAAIGKGFAIGSAALVSLALFGAFVSRA) form a helical membrane-spanning segment. Over 560–569 (GVKVVDVLSP) the chain is Intravacuolar. Residues 570–598 (KVFIGLIVGAMLPYWFSAMTMKSVGSAAL) traverse the membrane as a helical segment. Over 599 to 627 (KMVEEVRRQFNTIPGLMEGTAKPDYATCV) the chain is Cytoplasmic. Residues 628–656 (KISTDASIKEMIPPGALVMLTPLIVGTLF) traverse the membrane as a helical segment. A topological domain (intravacuolar) is located at residue G657. The helical transmembrane segment at 658 to 685 (VETLSGVLAGALVSGVQIAISASNTGGA) threads the bilayer. At 686 to 728 (WDNAKKYIEAGNSEHARSLGPKGSDCHKAAVIGDTIGDPLKDT) the chain is on the cytoplasmic side. Mg(2+) is bound by residues D687 and D723. Residue K726 coordinates substrate. Residues 729–754 (SGPSLNILIKLMAVESLVFAPFFATY) traverse the membrane as a helical segment. The Intravacuolar portion of the chain corresponds to 755-762 (GGLLFKYI).

The protein belongs to the H(+)-translocating pyrophosphatase (TC 3.A.10) family. K(+)-stimulated subfamily. In terms of assembly, monomer.

Its subcellular location is the vacuole membrane. It catalyses the reaction diphosphate + H2O + H(+)(in) = 2 phosphate + 2 H(+)(out). In terms of biological role, contributes to the transtonoplast (from cytosol to vacuole lumen) H(+)-electrochemical potential difference. It establishes a proton gradient of similar and often greater magnitude than the H(+)-ATPase on the same membrane. This Hordeum vulgare (Barley) protein is Pyrophosphate-energized vacuolar membrane proton pump.